A 144-amino-acid chain; its full sequence is Large ribosomal subunit protein uL13 (144 aa).

The protein belongs to the universal ribosomal protein uL13 family. In terms of assembly, part of the 50S ribosomal subunit.

Its function is as follows. This protein is one of the early assembly proteins of the 50S ribosomal subunit, although it is not seen to bind rRNA by itself. It is important during the early stages of 50S assembly. The sequence is that of Large ribosomal subunit protein uL13 from Herpetosiphon aurantiacus (strain ATCC 23779 / DSM 785 / 114-95).